We begin with the raw amino-acid sequence, 282 residues long: Pantothenate synthetase (282 aa).

30 to 37 (MGNLHEGH) provides a ligand contact to ATP. Residue H37 is the Proton donor of the active site. A (R)-pantoate-binding site is contributed by Q61. Position 61 (Q61) interacts with beta-alanine. 149–152 (GEKD) lines the ATP pocket. Q155 provides a ligand contact to (R)-pantoate. Residues V178 and 186-189 (KSSR) each bind ATP.

The protein belongs to the pantothenate synthetase family. Homodimer.

Its subcellular location is the cytoplasm. It catalyses the reaction (R)-pantoate + beta-alanine + ATP = (R)-pantothenate + AMP + diphosphate + H(+). It participates in cofactor biosynthesis; (R)-pantothenate biosynthesis; (R)-pantothenate from (R)-pantoate and beta-alanine: step 1/1. Catalyzes the condensation of pantoate with beta-alanine in an ATP-dependent reaction via a pantoyl-adenylate intermediate. In Marinobacter nauticus (strain ATCC 700491 / DSM 11845 / VT8) (Marinobacter aquaeolei), this protein is Pantothenate synthetase.